The sequence spans 533 residues: Berberine bridge enzyme-like 12 (533 aa).

A signal peptide spans 1–20 (MYLIFLLFFAASYSMSLSSA). An intrachain disulfide couples cysteine 32 to cysteine 95. N-linked (GlcNAc...) asparagine glycosylation is found at asparagine 35, asparagine 70, asparagine 133, asparagine 296, asparagine 412, and asparagine 417. Residues 73 to 249 (SMPKPSIIIV…LAFKVKLVTV (177 aa)) form the FAD-binding PCMH-type domain. Positions 110–174 (HDYDGLSYVS…EVHAFPAGVC (65 aa)) form a cross-link, 6-(S-cysteinyl)-8alpha-(pros-histidyl)-FAD (His-Cys).

It belongs to the oxygen-dependent FAD-linked oxidoreductase family. FAD is required as a cofactor. In terms of processing, the FAD cofactor is bound via a bicovalent 6-S-cysteinyl, 8alpha-N1-histidyl FAD linkage.

It localises to the secreted. The protein localises to the cell wall. This is Berberine bridge enzyme-like 12 from Arabidopsis thaliana (Mouse-ear cress).